The sequence spans 466 residues: Signal recognition particle 54 kDa protein (466 aa).

Residues 104–111, 184–188, and 242–245 each bind GTP; these read GLQGSGKT, DTAGR, and TKLD. Residues 446 to 466 are disordered; it reads QQQGGGGMGGLGGGGGLGPFG. The segment covering 448–466 has biased composition (gly residues); sequence QGGGGMGGLGGGGGLGPFG.

The protein belongs to the GTP-binding SRP family. SRP54 subfamily. As to quaternary structure, part of the signal recognition particle protein translocation system, which is composed of SRP and FtsY. Archaeal SRP consists of a 7S RNA molecule of 300 nucleotides and two protein subunits: SRP54 and SRP19.

The protein resides in the cytoplasm. The enzyme catalyses GTP + H2O = GDP + phosphate + H(+). Involved in targeting and insertion of nascent membrane proteins into the cytoplasmic membrane. Binds to the hydrophobic signal sequence of the ribosome-nascent chain (RNC) as it emerges from the ribosomes. The SRP-RNC complex is then targeted to the cytoplasmic membrane where it interacts with the SRP receptor FtsY. The polypeptide is Signal recognition particle 54 kDa protein (Haloquadratum walsbyi (strain DSM 16790 / HBSQ001)).